Consider the following 807-residue polypeptide: Putative histidine biosynthesis bifunctional protein HisCD (807 aa).

The histidinol dehydrogenase stretch occupies residues 1 to 440 (MTDHFDTLIR…ALNIAGQGVN (440 aa)). Residues Gln-261 and His-264 each contribute to the Zn(2+) site. Catalysis depends on residues Glu-328 and His-329. Residues Asp-362 and His-421 each coordinate Zn(2+). Positions 441–807 (MNNIFDANLL…VNEQPKEIAN (367 aa)) are histidinol-phosphate aminotransferase. Lys-655 carries the post-translational modification N6-(pyridoxal phosphate)lysine.

The protein in the N-terminal section; belongs to the histidinol dehydrogenase family. In the C-terminal section; belongs to the class-II pyridoxal-phosphate-dependent aminotransferase family. Histidinol-phosphate aminotransferase subfamily. Homodimer. The cofactor is Zn(2+). It depends on pyridoxal 5'-phosphate as a cofactor.

The enzyme catalyses L-histidinol phosphate + 2-oxoglutarate = 3-(imidazol-4-yl)-2-oxopropyl phosphate + L-glutamate. It catalyses the reaction L-histidinol + 2 NAD(+) + H2O = L-histidine + 2 NADH + 3 H(+). It participates in amino-acid biosynthesis; L-histidine biosynthesis; L-histidine from 5-phospho-alpha-D-ribose 1-diphosphate: step 7/9. The protein operates within amino-acid biosynthesis; L-histidine biosynthesis; L-histidine from 5-phospho-alpha-D-ribose 1-diphosphate: step 9/9. Catalyzes the sequential NAD-dependent oxidations of L-histidinol to L-histidinaldehyde and then to L-histidine. The chain is Putative histidine biosynthesis bifunctional protein HisCD (hisCD) from Photorhabdus laumondii subsp. laumondii (strain DSM 15139 / CIP 105565 / TT01) (Photorhabdus luminescens subsp. laumondii).